A 225-amino-acid chain; its full sequence is MKLVVSVTPRNLEEAQQIDAQRFVDADLIEWRADFLEKEEILKVAPAIFEKFAGRELIFTLRTKDEGGHIQLSDDEYVEMIKKVAQLYQPDYVDFEYFSHKDKIDEMLEFPNLVLSYHNFEETPENMMEILSELTSLTPKAVKVSVMANSGQDVLDLMNYTRGFKTLNPEQEYVTISMGRVGRISRIASDLTGSSWSFASLDEATAPGQISLSSMKKIRDILNEN.

Residues Ser6, 30–32, and Arg62 contribute to the 3-dehydroquinate site; that span reads EWR. His118 serves as the catalytic Proton donor/acceptor. Catalysis depends on Lys143, which acts as the Schiff-base intermediate with substrate. 3-dehydroquinate contacts are provided by Arg186, Thr205, and Gln209.

Belongs to the type-I 3-dehydroquinase family. In terms of assembly, homodimer.

The catalysed reaction is 3-dehydroquinate = 3-dehydroshikimate + H2O. It functions in the pathway metabolic intermediate biosynthesis; chorismate biosynthesis; chorismate from D-erythrose 4-phosphate and phosphoenolpyruvate: step 3/7. In terms of biological role, involved in the third step of the chorismate pathway, which leads to the biosynthesis of aromatic amino acids. Catalyzes the cis-dehydration of 3-dehydroquinate (DHQ) and introduces the first double bond of the aromatic ring to yield 3-dehydroshikimate. The polypeptide is 3-dehydroquinate dehydratase (Streptococcus gordonii (strain Challis / ATCC 35105 / BCRC 15272 / CH1 / DL1 / V288)).